The primary structure comprises 381 residues: Dihydroorotate dehydrogenase (quinone) (381 aa).

FMN-binding positions include 77 to 81 (AGCDK) and Ala101. Lys81 lines the substrate pocket. 126-129 (NRLG) lines the substrate pocket. The FMN site is built by Asn158 and Asn191. Substrate is bound at residue Asn191. Ser194 serves as the catalytic Nucleophile. Asn196 contributes to the substrate binding site. FMN contacts are provided by Lys229 and Thr257. Substrate is bound at residue 258–259 (NT). FMN contacts are provided by residues Gly287, Gly316, and 337–338 (YT).

It belongs to the dihydroorotate dehydrogenase family. Type 2 subfamily. In terms of assembly, monomer. The cofactor is FMN.

Its subcellular location is the cell membrane. It catalyses the reaction (S)-dihydroorotate + a quinone = orotate + a quinol. The protein operates within pyrimidine metabolism; UMP biosynthesis via de novo pathway; orotate from (S)-dihydroorotate (quinone route): step 1/1. Its function is as follows. Catalyzes the conversion of dihydroorotate to orotate with quinone as electron acceptor. The protein is Dihydroorotate dehydrogenase (quinone) (pyrD) of Synechocystis sp. (strain ATCC 27184 / PCC 6803 / Kazusa).